Consider the following 125-residue polypeptide: Inner membrane protein YbjM (125 aa).

Topologically, residues 1 to 6 (MKHKQR) are cytoplasmic. Residues 7 to 27 (WAGAICCFVLFIVVCLFLATH) traverse the membrane as a helical segment. At 28 to 34 (MKGAFRA) the chain is on the periplasmic side. A helical membrane pass occupies residues 35–55 (AGHPEIGLLFFILPGAVASFF). The Cytoplasmic segment spans residues 56-64 (SQRREVLKP). A helical membrane pass occupies residues 65 to 85 (LFGAMLAAPCSMLIMRLFFSP). The Periplasmic portion of the chain corresponds to 86 to 92 (TRSFWQE). A helical transmembrane segment spans residues 93 to 113 (LAWLLSAVFWCALGALCFLFI). Residues 114–125 (SSLFKPQHRKNQ) lie on the Cytoplasmic side of the membrane.

The protein localises to the cell inner membrane. This Escherichia coli O157:H7 protein is Inner membrane protein YbjM (ybjM).